The chain runs to 364 residues: MTKYTVAVAGATGYAGGEALRILAAHPAFEVTAVAGHSSIGHRLGEYQPHIPQLADLIVEDTTPAVLDGHDVIVLALPHGASGALAAQLDDDAVVVDLGADHRLERQQAWDDYYGGDFYQHWTYGMPELILGIGSDGKYVRQRDELTGAKRIAGPGCNVTATTLALQPAIAQGLVDTKSIVADLAVGYSGAGKNLKRTNLLASEAMGSASPYSVGGTHRHIPEIRQNFAHAAGLGASQADMFSLAFTPILVPMSRGILASVSAKLTDEALALTDEQIHDIWVQAYEGQEFIFVLDPGVMPATQNVLGSNAAHVQVAVDRRSGTLHAFTAIDNLNRGTAGQAIESLNIAFGLNDATGLSKIGVAP.

The active site involves Cys-157.

Belongs to the NAGSA dehydrogenase family. Type 1 subfamily.

It is found in the cytoplasm. It catalyses the reaction N-acetyl-L-glutamate 5-semialdehyde + phosphate + NADP(+) = N-acetyl-L-glutamyl 5-phosphate + NADPH + H(+). It participates in amino-acid biosynthesis; L-arginine biosynthesis; N(2)-acetyl-L-ornithine from L-glutamate: step 3/4. In terms of biological role, catalyzes the NADPH-dependent reduction of N-acetyl-5-glutamyl phosphate to yield N-acetyl-L-glutamate 5-semialdehyde. This Bifidobacterium animalis subsp. lactis (strain AD011) protein is N-acetyl-gamma-glutamyl-phosphate reductase.